Consider the following 482-residue polypeptide: Aspartyl/glutamyl-tRNA(Asn/Gln) amidotransferase subunit B (482 aa).

It belongs to the GatB/GatE family. GatB subfamily. Heterotrimer of A, B and C subunits.

The catalysed reaction is L-glutamyl-tRNA(Gln) + L-glutamine + ATP + H2O = L-glutaminyl-tRNA(Gln) + L-glutamate + ADP + phosphate + H(+). It carries out the reaction L-aspartyl-tRNA(Asn) + L-glutamine + ATP + H2O = L-asparaginyl-tRNA(Asn) + L-glutamate + ADP + phosphate + 2 H(+). Allows the formation of correctly charged Asn-tRNA(Asn) or Gln-tRNA(Gln) through the transamidation of misacylated Asp-tRNA(Asn) or Glu-tRNA(Gln) in organisms which lack either or both of asparaginyl-tRNA or glutaminyl-tRNA synthetases. The reaction takes place in the presence of glutamine and ATP through an activated phospho-Asp-tRNA(Asn) or phospho-Glu-tRNA(Gln). The protein is Aspartyl/glutamyl-tRNA(Asn/Gln) amidotransferase subunit B of Thermotoga sp. (strain RQ2).